The primary structure comprises 84 residues: Small ribosomal subunit protein bS16 (84 aa).

This sequence belongs to the bacterial ribosomal protein bS16 family.

In Burkholderia multivorans (strain ATCC 17616 / 249), this protein is Small ribosomal subunit protein bS16.